We begin with the raw amino-acid sequence, 588 residues long: Putative pentatricopeptide repeat-containing protein At5g52630 (588 aa).

PPR repeat units follow at residues 14-48 (NYNQ…GLSL), 49-79 (IPLV…SPQK), 80-114 (SSTT…NLRP), 115-149 (DDHV…GYDA), 150-180 (DVFV…MPQR), 181-215 (NVVT…NLAV), 216-250 (NDYS…SFDS), 251-281 (SSFV…VPVK), 282-316 (NLGI…GMKP), 317-351 (NFIT…RIEP), and 352-386 (TDKH…PTES). The segment at 387 to 462 (VWGALLTSCT…ETGLSWVEER (76 aa)) is type E motif. Residues 463–493 (NKVHTFAAGERRHEKSKEIYEKLAELGEEME) form a type E(+) motif region. A type DYW motif region spans residues 494-588 (KAGYIADTSY…DGKCSCNDYW (95 aa)).

This sequence belongs to the PPR family. PCMP-H subfamily.

The chain is Putative pentatricopeptide repeat-containing protein At5g52630 (PCMP-H52) from Arabidopsis thaliana (Mouse-ear cress).